We begin with the raw amino-acid sequence, 147 residues long: Hemoglobin subunit beta (147 aa).

Val2 bears the N-acetylvaline mark. A Globin domain is found at 3–147; that stretch reads HLSGDEKNAV…VANALAHRYH (145 aa). The residue at position 45 (Ser45) is a Phosphoserine. Lys60 bears the N6-acetyllysine mark. His64 serves as a coordination point for heme b. Position 83 is an N6-acetyllysine (Lys83). A heme b-binding site is contributed by His93. An S-nitrosocysteine modification is found at Cys94.

Belongs to the globin family. Heterotetramer of two alpha chains and two beta chains. In terms of tissue distribution, red blood cells.

Functionally, involved in oxygen transport from the lung to the various peripheral tissues. This chain is Hemoglobin subunit beta (HBB), found in Camelus dromedarius (Dromedary).